Here is a 1256-residue protein sequence, read N- to C-terminus: Muramidase-released protein (1256 aa).

Residues 1 to 47 (MRRSNKKSFDWYGTKQQFSIRKYHFGAASVLLGVSLVLGAGAQVVKA) form the signal peptide. Small repeat units lie at residues 663–681 (KTTG…VYEK) and 839–861 (KTDG…VYQK). Disordered regions lie at residues 873–949 (PETD…VDTP), 967–994 (GNPI…KTVT), and 1028–1049 (KEPV…TDNK). A Large repeat occupies 953 to 1006 (VPVKKVVTNHVDEEGNPIAPQEEGTKPNKSIPGYEFTGKTVTDEDGNTTHIYKK). Over residues 1033–1045 (DTPTSPEGTPYDT) the composition is skewed to polar residues. The Small repeat unit spans residues 1064 to 1084 (RVDGTENGKVVEGETVVTYVY). Large repeat units follow at residues 1089–1142 (TPAK…IYKK) and 1143–1195 (TPAK…IYRK). Residues 1102-1137 (EGNPVAPQEEGTKPNKSIPGYEFTGKTVTDEDGNTT) form a disordered region. The disordered stretch occupies residues 1196 to 1229 (LSNKPTTPEKETPAKPQAGKTASGKAQLPNTGEA). The short motif at 1223–1227 (LPNTG) is the LPXTG sorting signal element. Residue Thr1226 is modified to Pentaglycyl murein peptidoglycan amidated threonine. Residues 1227–1256 (GEASSVAGALGTAMLVATLAFARKRRRNED) constitute a propeptide, removed by sortase.

The protein resides in the secreted. Its subcellular location is the cell wall. The sequence is that of Muramidase-released protein (mrp) from Streptococcus suis.